A 179-amino-acid polypeptide reads, in one-letter code: Ribosome maturation factor RimM (179 aa).

The PRC barrel domain maps to 99–174; the sequence is EEDEYYFDQI…IMIVDLPEGL (76 aa).

Belongs to the RimM family. As to quaternary structure, binds ribosomal protein uS19.

It localises to the cytoplasm. In terms of biological role, an accessory protein needed during the final step in the assembly of 30S ribosomal subunit, possibly for assembly of the head region. Essential for efficient processing of 16S rRNA. May be needed both before and after RbfA during the maturation of 16S rRNA. It has affinity for free ribosomal 30S subunits but not for 70S ribosomes. This chain is Ribosome maturation factor RimM, found in Natranaerobius thermophilus (strain ATCC BAA-1301 / DSM 18059 / JW/NM-WN-LF).